Here is a 93-residue protein sequence, read N- to C-terminus: Small ribosomal subunit protein uS19 (93 aa).

The protein belongs to the universal ribosomal protein uS19 family.

Functionally, protein S19 forms a complex with S13 that binds strongly to the 16S ribosomal RNA. In Thermus thermophilus (strain ATCC BAA-163 / DSM 7039 / HB27), this protein is Small ribosomal subunit protein uS19 (rpsS).